Here is a 242-residue protein sequence, read N- to C-terminus: tRNA (guanine-N(1)-)-methyltransferase (242 aa).

S-adenosyl-L-methionine is bound by residues G113 and 133–138; that span reads IGDYVL.

This sequence belongs to the RNA methyltransferase TrmD family. In terms of assembly, homodimer.

The protein localises to the cytoplasm. It catalyses the reaction guanosine(37) in tRNA + S-adenosyl-L-methionine = N(1)-methylguanosine(37) in tRNA + S-adenosyl-L-homocysteine + H(+). Functionally, specifically methylates guanosine-37 in various tRNAs. The chain is tRNA (guanine-N(1)-)-methyltransferase from Shewanella sediminis (strain HAW-EB3).